The chain runs to 361 residues: AP2/ERF and B3 domain-containing transcription repressor TEM1 (361 aa).

The interval 1 to 73 (MEYSCVDDSS…SRKLPSSKYK (73 aa)) is disordered. The segment covering 9 to 27 (SSTTSESLSISTTPKPTTT) has biased composition (low complexity). The AP2/ERF DNA-binding region spans 71–126 (KYKGVVPQPNGRWGAQIYEKHQRVWLGTFNEEEEAASSYDIAVRRFRGRDAVTNFK). A DNA-binding region (TF-B3) is located at residues 195–306 (FEKTVTPSDV…QLYIHWKVRS (112 aa)).

The protein belongs to the AP2/ERF transcription factor family. RAV subfamily. As to quaternary structure, interacts with FT. In terms of tissue distribution, expressed in leaves.

The protein localises to the nucleus. In terms of biological role, transcriptional repressor of flowering time on long day plants. Acts directly on FT expression by binding 5'-CAACA-3' and 5'-CACCTG-3 sequences. Functionally redundant with TEM2. In Arabidopsis thaliana (Mouse-ear cress), this protein is AP2/ERF and B3 domain-containing transcription repressor TEM1 (TEM1).